An 871-amino-acid polypeptide reads, in one-letter code: Serrate RNA effector molecule homolog (871 aa).

The tract at residues 1-90 (MGDSDDEYDR…RRDWDGHSSD (90 aa)) is disordered. The residue at position 2 (G2) is an N-acetylglycine. The residue at position 4 (S4) is a Phosphoserine. Y8 is modified (phosphotyrosine). The segment covering 8–73 (YDRRRRDKFR…ERFSPPRHEL (66 aa)) has biased composition (basic and acidic residues). 3 positions are modified to phosphoserine: S67, S74, and S136. K150 participates in a covalent cross-link: Glycyl lysine isopeptide (Lys-Gly) (interchain with G-Cter in SUMO2). Positions 272–411 (EEEEQAGKPG…KPKDAAGLEC (140 aa)) are disordered. Basic and acidic residues predominate over residues 297–347 (DGERKTNDKDEKKEDSKQAENDSSNDDKTKKSEGDGDKEEKKEDSEKEAKK). The segment covering 370 to 385 (SESESESGQAEEEKEE) has biased composition (acidic residues). The span at 386–411 (AEALKEKEKPKEEEWEKPKDAAGLEC) shows a compositional bias: basic and acidic residues. 2 positions are modified to phosphoserine: S492 and S539. Position 543 is a phosphothreonine (T543). S569 carries the phosphoserine modification. Residues 574–597 (ELLGSSGGAPPEEPPKEGNPAEIN) are disordered. Phosphothreonine is present on T670. The residue at position 678 (S678) is a Phosphoserine. 3 positions are modified to omega-N-methylarginine: R828, R835, and R845. The tract at residues 830–849 (NYDAFRGQGGYPGKPRNRMV) is disordered.

Belongs to the ARS2 family. As to quaternary structure, interacts with CASP8AP2, ERBB4, NCBP1/CBP80 and DROSHA. Interacts with LUZP4. Interacts with NCBP2/CBP20 and NCBP3. Interacts with MTREX.

Its subcellular location is the nucleus. It is found in the nucleoplasm. The protein resides in the cytoplasm. In terms of biological role, acts as a mediator between the cap-binding complex (CBC) and the primary microRNAs (miRNAs) processing machinery during cell proliferation. Contributes to the stability and delivery of capped primary miRNA transcripts to the primary miRNA processing complex containing DGCR8 and DROSHA, thereby playing a role in RNA-mediated gene silencing (RNAi) by miRNAs. Binds capped RNAs (m7GpppG-capped RNA); however interaction is probably mediated via its interaction with NCBP1/CBP80 component of the CBC complex. Involved in cell cycle progression at S phase. Does not directly confer arsenite resistance but rather modulates arsenic sensitivity. Independently of its activity on miRNAs, necessary and sufficient to promote neural stem cell self-renewal. Does so by directly binding SOX2 promoter and positively regulating its transcription. The chain is Serrate RNA effector molecule homolog (SRRT) from Pongo abelii (Sumatran orangutan).